A 511-amino-acid polypeptide reads, in one-letter code: Ribonuclease Y (511 aa).

A helical transmembrane segment spans residues 2-22 (ITTVIIAIVCFAVGGGLSYML). The KH domain maps to 201-261 (SVTVFHIESD…VRREIARLAL (61 aa)). The HD domain maps to 327–420 (LLQHARETAN…VQVCDAISGA (94 aa)).

The protein belongs to the RNase Y family.

It is found in the cell membrane. Functionally, endoribonuclease that initiates mRNA decay. The protein is Ribonuclease Y of Phocaeicola vulgatus (strain ATCC 8482 / DSM 1447 / JCM 5826 / CCUG 4940 / NBRC 14291 / NCTC 11154) (Bacteroides vulgatus).